The primary structure comprises 449 residues: UDP-N-acetylmuramoylalanine--D-glutamate ligase (449 aa).

119 to 125 provides a ligand contact to ATP; sequence GTNGKTT.

The protein belongs to the MurCDEF family.

The protein localises to the cytoplasm. It carries out the reaction UDP-N-acetyl-alpha-D-muramoyl-L-alanine + D-glutamate + ATP = UDP-N-acetyl-alpha-D-muramoyl-L-alanyl-D-glutamate + ADP + phosphate + H(+). Its pathway is cell wall biogenesis; peptidoglycan biosynthesis. Its function is as follows. Cell wall formation. Catalyzes the addition of glutamate to the nucleotide precursor UDP-N-acetylmuramoyl-L-alanine (UMA). In Lactococcus lactis subsp. cremoris (strain SK11), this protein is UDP-N-acetylmuramoylalanine--D-glutamate ligase.